A 651-amino-acid polypeptide reads, in one-letter code: Transcription termination factor FttA (651 aa).

The archaeal CPSF-KH domain stretch occupies residues 1–200 (MTFLIKRETQ…ITGLGGFREV (200 aa)). Positions 12-79 (DQILRDIRAV…ISVRPDPEVL (68 aa)) are KHa. A KHb region spans residues 80–147 (LPPEEAEKLI…WAPKVVRTPP (68 aa)). The metallo-beta-lactamase N-terminus stretch occupies residues 188–398 (WIRITGLGGF…LVMESTYGGA (211 aa)). Zn(2+) contacts are provided by His256, His258, Asp260, His261, His344, and Asp367. Positions 399 to 592 (NDIQMPREEA…MEVHTIDGFS (194 aa)) are beta-Casp. Positions 593–651 (GHADRRELMNYVAKVRPRPERIITVHGEPQKCLDLATSIHRKFGISTRAPNNLDTIRLR) are metallo-beta-lactamase C-terminus. His618 contacts Zn(2+).

The protein belongs to the metallo-beta-lactamase superfamily. RNA-metabolizing metallo-beta-lactamase-like family. FttA subfamily. In terms of assembly, homodimer. Interacts with RNA polymerase (RNAP), interacts with the Spt4-Spt5 complex. Zn(2+) is required as a cofactor.

Terminates transcription on the whole genome. Termination is linked to FttA-mediated RNA cleavage and does not require NTP hydrolysis. Cleaves endonucleolytically at the RNA exit channel of RNA polymerase (RNAP); the 5'-3' exonuclease activity of this protein degrades the nascent RNA released from RNAP. Functionally, has nuclease activity on single-stranded RNA. This Pyrococcus horikoshii (strain ATCC 700860 / DSM 12428 / JCM 9974 / NBRC 100139 / OT-3) protein is Transcription termination factor FttA.